Here is a 440-residue protein sequence, read N- to C-terminus: Xylose isomerase (440 aa).

Catalysis depends on residues His-101 and Asp-104. The Mg(2+) site is built by Glu-232, Glu-268, His-271, Asp-296, Asp-307, Asp-309, and Asp-339.

Belongs to the xylose isomerase family. In terms of assembly, homotetramer. Mg(2+) serves as cofactor.

The protein resides in the cytoplasm. It carries out the reaction alpha-D-xylose = alpha-D-xylulofuranose. In Enterobacter sp. (strain 638), this protein is Xylose isomerase.